The following is a 312-amino-acid chain: Serine protease 48 (312 aa).

Positions 1–22 (MGPAGLKVLLLLFLGAFQGSFT) are cleaved as a signal peptide. The Peptidase S1 domain maps to 40–276 (IVGGQDAALG…YQKWISAIIS (237 aa)). An intrachain disulfide couples C65 to C81. Catalysis depends on charge relay system residues H80 and D126. N-linked (GlcNAc...) asparagine glycosylation is present at N149. Disulfide bonds link C160-C235, C190-C214, and C225-C253. S229 acts as the Charge relay system in catalysis. N-linked (GlcNAc...) asparagine glycosylation is present at N263.

It belongs to the peptidase S1 family.

The protein localises to the secreted. In Mus musculus (Mouse), this protein is Serine protease 48 (Prss48).